The primary structure comprises 139 residues: Small ribosomal subunit protein uS12 (139 aa).

Asp-102 bears the 3-methylthioaspartic acid mark. Positions 116-139 (DTTGVAKRSQGRSKYGAKRPKKSK) are disordered. The segment covering 124-139 (SQGRSKYGAKRPKKSK) has biased composition (basic residues).

The protein belongs to the universal ribosomal protein uS12 family. As to quaternary structure, part of the 30S ribosomal subunit. Contacts proteins S8 and S17. May interact with IF1 in the 30S initiation complex.

In terms of biological role, with S4 and S5 plays an important role in translational accuracy. Functionally, interacts with and stabilizes bases of the 16S rRNA that are involved in tRNA selection in the A site and with the mRNA backbone. Located at the interface of the 30S and 50S subunits, it traverses the body of the 30S subunit contacting proteins on the other side and probably holding the rRNA structure together. The combined cluster of proteins S8, S12 and S17 appears to hold together the shoulder and platform of the 30S subunit. This Mesomycoplasma hyopneumoniae (strain 7448) (Mycoplasma hyopneumoniae) protein is Small ribosomal subunit protein uS12.